The sequence spans 1728 residues: Protein NETWORKED 1A (1728 aa).

Positions Tyr-13–Leu-92 constitute an NAB domain. 7 coiled-coil regions span residues Leu-155–Glu-446, Met-476–Ile-827, Phe-857–Asn-885, Gln-954–Gln-1016, Glu-1090–Val-1323, Leu-1403–Arg-1431, and Arg-1576–Lys-1684. A disordered region spans residues Ala-1419–Lys-1441. The span at Arg-1424–Asp-1439 shows a compositional bias: basic residues.

Belongs to the NET family. Interacts with F-actin. In terms of tissue distribution, expressed in root meristems and at very low levels throughout mature vasculature.

The protein resides in the cytoplasm. Its subcellular location is the cytoskeleton. It localises to the cell membrane. It is found in the cell junction. The protein localises to the plasmodesma. In terms of biological role, plant-specific actin binding protein. Associates with F-actin at the plasma membrane and plasmodesmata. May be part of a membrane-cytoskeletal adapter complex. The polypeptide is Protein NETWORKED 1A (Arabidopsis thaliana (Mouse-ear cress)).